Here is a 91-residue protein sequence, read N- to C-terminus: Large ribosomal subunit protein uL23 (91 aa).

Belongs to the universal ribosomal protein uL23 family. In terms of assembly, part of the 50S ribosomal subunit. Contacts protein L29, and trigger factor when it is bound to the ribosome.

Functionally, one of the early assembly proteins it binds 23S rRNA. One of the proteins that surrounds the polypeptide exit tunnel on the outside of the ribosome. Forms the main docking site for trigger factor binding to the ribosome. The sequence is that of Large ribosomal subunit protein uL23 from Staphylococcus epidermidis (strain ATCC 35984 / DSM 28319 / BCRC 17069 / CCUG 31568 / BM 3577 / RP62A).